The sequence spans 1073 residues: Envelopment polyprotein (1073 aa).

The signal sequence occupies residues 1-19 (MMKVIWFSSLICLVIQCSG). The Lumenal portion of the chain corresponds to 20-453 (DSGPIICAGP…NPQCYPAKKW (434 aa)). Cysteines 26 and 49 form a disulfide. N-linked (GlcNAc...) asparagine; by host glycosylation is found at N33 and N63. Disulfide bonds link C143-C156, C180-C327, C206-C216, C258-C305, C287-C292, C349-C352, C356-C424, and C376-C381. The chain crosses the membrane as a helical span at residues 454 to 474 (LFIIIVILLGYAGLMLLTNVL). The tract at residues 475 to 521 (KAIGVWGSWVIAPVKLMFAIIKKLMRTVSCLVGKLMDRGRQVIHEEI) is golgi retention signal. Topologically, residues 475–535 (KAIGVWGSWV…EGNQDDVRIE (61 aa)) are cytoplasmic. Positions 536 to 562 (MARPRRVRHWMYSPVILTILAIGLAEG) are internal signal sequence for glycoprotein C. Cystine bridges form between C563–C604, C576–C586, C629–C725, C644–C841, C650–C698, C656–C705, C660–C687, C691–C696, C778–C793, and C809–C823. Over 563–1036 (CDEMVHADSK…ALFGNGLSRW (474 aa)) the chain is Lumenal. Residues 650-656 (CRWAGDC) form a fusion loop region. A fusion loop region spans residues 691 to 705 (CGGAACGCFNAAPSC). N853 and N914 each carry an N-linked (GlcNAc...) asparagine; by host glycan. Disulfide bonds link C908–C978, C918–C921, and C943–C974. The N-linked (GlcNAc...) asparagine; by host glycan is linked to N936. The helical transmembrane segment at 1037–1057 (ILGVIGVLLGGLALFFLIMFL) threads the bilayer. At 1058–1073 (LKLGTKQVFRSRTKLA) the chain is on the cytoplasmic side.

Belongs to the phlebovirus envelope glycoprotein family. In terms of assembly, homodimer. Heterodimer with glycoprotein C. Homotrimer (postfusion). As to quaternary structure, heterodimer with glycoprotein N. Specific enzymatic cleavages in vivo yield mature proteins including glycoprotein C and glycoprotein N. In terms of processing, the cytoplasmic tail is Palmitoylated. Post-translationally, glycosylated. Palmitoylated.

The protein localises to the virion membrane. It localises to the host Golgi apparatus membrane. Its subcellular location is the host endoplasmic reticulum membrane. In terms of biological role, structural component of the virion that interacts with glycoprotein C. It shields the hydrophobic fusion loops of the glycoprotein C, preventing premature fusion. The glycoprotein protrusions are arranged on an icosahedral lattice, with T=12 triangulation. They are able to attach the virion to the host cell receptor CD209/DC-SIGN and to promote fusion of membranes with the late endosome after clathrin-mediated endocytosis of the virion. Plays a role in the packaging of ribonucleoproteins and polymerase during virus assembly. Structural component of the virion that interacts with glycoprotein N. Acts as a class II fusion protein that is activated upon acidification and subsequent repositioning of the glycoprotein N. The glycoprotein protrusions are arranged on an icosahedral lattice, with T=12 triangulation. They are able to attach the virion to the host cell receptor CD209/DC-SIGN and to promote fusion of membranes with the late endosome after clathrin-mediated endocytosis of the virion. This chain is Envelopment polyprotein (GP), found in SFTS phlebovirus (isolate SFTSV/Human/China/HB29/2010) (Severe fever with thrombocytopenia virus).